Consider the following 445-residue polypeptide: FAS-associated factor 2 (445 aa).

Alanine 2 carries the N-acetylalanine modification. The UBA domain maps to 12–48 (EQTEKLLQFQDLTGIESMEQCRLALEQHNWNMEAAVQ). Lysine 167 carries the N6-acetyllysine modification. Residues 275 to 350 (SERLEREERN…EEKERKLECL (76 aa)) adopt a coiled-coil conformation. The disordered stretch occupies residues 300–361 (SLRADQEKER…PEPSPDDPES (62 aa)). Over residues 303-348 (ADQEKERKKREEKERKRRKEEEVQQQKLAEERRRQNLQEEKERKLE) the composition is skewed to basic and acidic residues. The UBX domain maps to 357 to 439 (DDPESVKIIF…GLSHTEVLFV (83 aa)).

Identified in a complex that contains SEL1L, OS9, FAF2/UBXD8, UBE2J1/UBC6E and AUP1. Interacts with YOD1. Interacts (via N-terminus) with UBQLN2 (via C-terminus). Interacts with PNPLA2. Interacts with ZFAND2B; probably through VCP. Interacts with LMBR1L and UBAC2.

It localises to the cytoplasm. Its subcellular location is the lipid droplet. It is found in the endoplasmic reticulum. Functionally, plays an important role in endoplasmic reticulum-associated degradation (ERAD) that mediates ubiquitin-dependent degradation of misfolded endoplasmic reticulum proteins. By controlling the steady-state expression of the IGF1R receptor, indirectly regulates the insulin-like growth factor receptor signaling pathway. Involved in inhibition of lipid droplet degradation by binding to phospholipase PNPL2 and inhibiting its activity by promoting dissociation of PNPL2 from its endogenous activator, ABHD5 which inhibits the rate of triacylglycerol hydrolysis. Involved in stress granule disassembly: associates with ubiquitinated G3BP1 in response to heat shock, thereby promoting interaction between ubiquitinated G3BP1 and VCP, followed by G3BP1 extraction from stress granules and stress granule disassembly. This Mus musculus (Mouse) protein is FAS-associated factor 2 (Faf2).